We begin with the raw amino-acid sequence, 955 residues long: uncharacterized protein (955 aa).

Residues 23–90 (ANNYLEEFQK…RNSLLQLFLA (68 aa)) enclose the Importin N-terminal domain.

This is an uncharacterized protein from Schizosaccharomyces pombe (strain 972 / ATCC 24843) (Fission yeast).